We begin with the raw amino-acid sequence, 481 residues long: PTS system N-acetylmuramic acid-specific EIIBC component (481 aa).

One can recognise a PTS EIIB type-1 domain in the interval 1–89; the sequence is MAKITQTMMA…NALIESGDNV (89 aa). Cys28 (phosphocysteine intermediate; for EIIB activity) is an active-site residue. The PTS EIIC type-1 domain occupies 122-481; it reads SKFATIFTPL…FFGCKDVDLS (360 aa). Helical transmembrane passes span 124–144, 165–185, 190–210, 225–245, 263–283, 307–327, 342–362, 376–396, 406–426, and 448–468; these read FATI…LLGI, LVAY…ILIG, QAFG…VLGY, FFGF…AAIL, MILT…LIIM, AAIL…QGFV, LFPI…ALYA, GAII…VTLP, IGGA…LPVG, and IFAG…VGFA.

Its subcellular location is the cell inner membrane. The enzyme catalyses N-acetyl-beta-D-muramate(out) + N(pros)-phospho-L-histidyl-[protein] = N-acetyl-beta-D-muramate 6-phosphate(in) + L-histidyl-[protein]. Its function is as follows. The phosphoenolpyruvate-dependent sugar phosphotransferase system (sugar PTS), a major carbohydrate active transport system, catalyzes the phosphorylation of incoming sugar substrates concomitantly with their translocation across the cell membrane. This system is involved in N-acetylmuramic acid (MurNAc) transport, yielding cytoplasmic MurNAc-6-P. Is also able to take up anhydro-N-acetylmuramic acid (anhMurNAc), but cannot phosphorylate the carbon 6, probably because of the 1,6-anhydro ring. The sequence is that of PTS system N-acetylmuramic acid-specific EIIBC component (murP) from Vibrio cholerae serotype O1 (strain ATCC 39315 / El Tor Inaba N16961).